Reading from the N-terminus, the 316-residue chain is MRNDWTFKEAKQIFNLPLLELLYKAQTIHRKYFDPNKIQISMLLNIKTGNCPENCGYCSQSSHYKTDLQKEPLVDIDTLISEAKKAKELGSTRFCMGAAWRSPLDKDLKIVCQMIEEVKKLGLETCVTLGFLKEHQIAMLKKAGLDFYNHNMNTSPEFYEHIATTHTFDDRLATLKAVRKFGIKLCSGGIIGLGETIDDRISMLLLLATLEEQPESVPINRFVKVAGTPLNPQSDIDPFDFVRIIALTRILMPKSYIRLAAGREQMSDELQTLCFMGGANSIFYGGRLLTTDGPQPEQDDLLFQKIGLEKVQTICH.

Residues 36–260 form the Radical SAM core domain; the sequence is NKIQISMLLN…LMPKSYIRLA (225 aa). 3 residues coordinate [4Fe-4S] cluster: Cys51, Cys55, and Cys58. Residues Cys95, Cys126, Cys186, and Arg258 each coordinate [2Fe-2S] cluster.

Belongs to the radical SAM superfamily. Biotin synthase family. In terms of assembly, homodimer. [4Fe-4S] cluster serves as cofactor. It depends on [2Fe-2S] cluster as a cofactor.

It carries out the reaction (4R,5S)-dethiobiotin + (sulfur carrier)-SH + 2 reduced [2Fe-2S]-[ferredoxin] + 2 S-adenosyl-L-methionine = (sulfur carrier)-H + biotin + 2 5'-deoxyadenosine + 2 L-methionine + 2 oxidized [2Fe-2S]-[ferredoxin]. The protein operates within cofactor biosynthesis; biotin biosynthesis; biotin from 7,8-diaminononanoate: step 2/2. Its function is as follows. Catalyzes the conversion of dethiobiotin (DTB) to biotin by the insertion of a sulfur atom into dethiobiotin via a radical-based mechanism. The sequence is that of Biotin synthase from Lawsonia intracellularis (strain PHE/MN1-00).